A 422-amino-acid polypeptide reads, in one-letter code: Mitochondrial distribution and morphology protein 12 (422 aa).

The SMP-LTD domain occupies 1–386; that stretch reads MSFDINWNQL…WPSWICIDMN (386 aa). 2 disordered regions span residues 74-134 and 387-422; these read GATN…HDLG and DDGD…THEV. Acidic residues-rich tracts occupy residues 109–130 and 387–401; these read FDDD…EYDD and DDGD…EDSN. Over residues 405–422 the composition is skewed to basic and acidic residues; sequence GDGKDNDGKHGDGPTHEV.

This sequence belongs to the MDM12 family. In terms of assembly, component of the ER-mitochondria encounter structure (ERMES) or MDM complex, composed of MMM1, MDM10, MDM12 and MDM34. An MMM1 homodimer associates with one molecule of MDM12 on each side in a pairwise head-to-tail manner, and the SMP-LTD domains of MMM1 and MDM12 generate a continuous hydrophobic tunnel for phospholipid trafficking.

It localises to the mitochondrion outer membrane. The protein localises to the endoplasmic reticulum membrane. Its function is as follows. Component of the ERMES/MDM complex, which serves as a molecular tether to connect the endoplasmic reticulum (ER) and mitochondria. Components of this complex are involved in the control of mitochondrial shape and protein biogenesis, and function in nonvesicular lipid trafficking between the ER and mitochondria. MDM12 is required for the interaction of the ER-resident membrane protein MMM1 and the outer mitochondrial membrane-resident beta-barrel protein MDM10. The MDM12-MMM1 subcomplex functions in the major beta-barrel assembly pathway that is responsible for biogenesis of all mitochondrial outer membrane beta-barrel proteins, and acts in a late step after the SAM complex. The MDM10-MDM12-MMM1 subcomplex further acts in the TOM40-specific pathway after the action of the MDM12-MMM1 complex. Essential for establishing and maintaining the structure of mitochondria and maintenance of mtDNA nucleoids. The sequence is that of Mitochondrial distribution and morphology protein 12 from Candida dubliniensis (strain CD36 / ATCC MYA-646 / CBS 7987 / NCPF 3949 / NRRL Y-17841) (Yeast).